A 245-amino-acid chain; its full sequence is UPF0328 protein ECU09_2010 (245 aa).

It belongs to the UPF0328 family.

This chain is UPF0328 protein ECU09_2010, found in Encephalitozoon cuniculi (strain GB-M1) (Microsporidian parasite).